The chain runs to 750 residues: Small G protein signaling modulator 3 (750 aa).

Residues 114-305 form the Rab-GAP TBC domain; that stretch reads GIPHGMRPQL…RIWDLFFYEG (192 aa). Serine 406 is subject to Phosphoserine. A coiled-coil region spans residues 415 to 439; that stretch reads EDDLEALKAKNIKQTELVADLREAI. The SH3 domain maps to 480-539; that stretch reads SHRRRAKALLDFERHDDDELGFRKNDIITIISQKDEHCWVGELNGLRGWFPAKFVEVLDE. The 164-residue stretch at 555–718 folds into the RUN domain; sequence GVTDLVRGTL…FAFSLSQDWE (164 aa).

This sequence belongs to the small G protein signaling modulator family. In terms of assembly, interacts with GJA1. Interaction with GJA1 induces its degradation. Interacts via its RUN domain with the C-terminal region of NF2. Interacts with RAB3A, RAB4A, RAB5A, RAB8A, RAB11A, RAP1A, RAP1B, RAP2A, RAP2B and PDCD6I. No interaction with RAB27A. Widely expressed.

It is found in the cytoplasm. In terms of biological role, may play a cooperative role in NF2-mediated growth suppression of cells. The chain is Small G protein signaling modulator 3 from Mus musculus (Mouse).